Consider the following 760-residue polypeptide: Complement C2 (760 aa).

Positions 1–18 (MAPLLALFYLLQLGPGLA) are cleaved as a signal peptide. 3 consecutive Sushi domains span residues 20–90 (LFCN…AVCK), 92–151 (VRCL…VCDN), and 154–212 (SHCP…ICRQ). 6 disulfide bridges follow: Cys-22/Cys-62, Cys-49/Cys-89, Cys-94/Cys-136, Cys-122/Cys-149, Cys-156/Cys-197, and Cys-182/Cys-210. 2 N-linked (GlcNAc...) asparagine glycosylation sites follow: Asn-27 and Asn-32. Asn-117 carries an N-linked (GlcNAc...) asparagine glycan. A VWFA domain is found at 261 to 459 (NLYLLLDASQ…KALQQIFEHM (199 aa)). The MIDAS-like motif motif lies at 267-271 (DASQS). Residues Ser-269 and Ser-271 each contribute to the Mg(2+) site. Residues Asn-297 and Asn-340 are each glycosylated (N-linked (GlcNAc...) asparagine). Residue Thr-344 participates in Mg(2+) binding. Cystine bridges form between Cys-470–Cys-590, Cys-499–Cys-515, Cys-593–Cys-609, Cys-647–Cys-674, and Cys-685–Cys-715. Positions 471 to 752 (GVGNMSANAS…LQPWLRQHLD (282 aa)) constitute a Peptidase S1 domain. 2 N-linked (GlcNAc...) asparagine glycosylation sites follow: Asn-474 and Asn-478. Catalysis depends on charge relay system residues His-514 and Asp-570. A glycan (N-linked (GlcNAc...) asparagine) is linked at Asn-663. The active-site Charge relay system is the Ser-689.

It belongs to the peptidase S1 family. Serine protease component of the C3 convertase, also named C4bC2b, composed of the serine protease complement C2b and complement C4b. Serine protease component of the C5 convertase, also named C4bC2bC3b, composed of the serine protease complement C2b, complement C3b, as well as complement C4b. It depends on Mg(2+) as a cofactor. The cofactor is Mn(2+). Post-translationally, cleaved and activated by different proteases depending on the complement pathway to generate complement C2a and serine protease complement C2b chains. Cleaved and activated by C1S following activation by the classical complement system. Cleaved and activated by MASP2 following activation by the lectin complement system. Cleaved and activated by GZMK following activation by the GZMK complement system.

The protein localises to the secreted. It is found in the cell surface. It carries out the reaction Selective cleavage of Arg-|-Ser bond in complement component C3 alpha-chain to form C3a and C3b, and Arg-|-Xaa bond in complement component C5 alpha-chain to form C5a and C5b.. Precursor of the catalytic component of the C3 and C5 convertase complexes, which are part of the complement pathway, a cascade of proteins that leads to phagocytosis and breakdown of pathogens and signaling that strengthens the adaptive immune system. Component C2 is part of the classical, lectin and GZMK complement systems. In terms of biological role, catalytic component of the complement C3 and C5 convertase complexes. Following complement activation, recruited to the surface of pathogens by complement C4b opsonin to form the C3 convertase, or C3b and C4b opsonins to form the C5 convertase. As part of the C3 convertase, cleaves and activate C3 into C3a anaphylatoxin and C3b opsonin, the next components of the complement pathways. As part of the C5 convertase, cleaves and activate C5 into C5a anaphylatoxin and C5b component of the membrane attack complex. The protein is Complement C2 of Mus musculus (Mouse).